Here is a 688-residue protein sequence, read N- to C-terminus: Collagen alpha-2(IX) chain (688 aa).

An N-terminal signal peptide occupies residues 1 to 22 (MAPAADPRSLLVLLQVLGLALA). A triple-helical region 4 (COL4) region spans residues 26 to 162 (GLPGEPGPPG…PGKPGRPGTI (137 aa)). Disordered regions lie at residues 26–520 (GLPG…RDAS), 549–578 (GATGMMGPPGPPGPPGYPGKQGPHGHPGPR), and 590–662 (IGNT…LPGF). Pro residues-rich tracts occupy residues 30-42 (EPGPPGPPGPPGV) and 105-126 (LPGPPGLPGPGFAGPPGPPGPV). Residues 128-138 (LPGEIGLTGPK) show a composition bias toward low complexity. The segment covering 143–156 (PEGPSGPPGPPGKP) has biased composition (pro residues). At proline 159 the chain carries 4-hydroxyproline. Residues 163–179 (QGLEGSADFLCPTNCPA) are nonhelical region 4 (NC4). The O-linked (Xyl...) (glycosaminoglycan) serine glycan is linked to serine 168. The segment at 180–518 (GVKGPPGLQG…PGRQGVAGRD (339 aa)) is triple-helical region 3 (COL3). Lysine 182 is modified (5-hydroxylysine). The O-linked (Gal...) hydroxylysine glycan is linked to lysine 182. Low complexity-rich tracts occupy residues 251-265 (KGMVGSVGAAGSPGE) and 394-412 (PVGQPGPQGRQGPKGEQGP). Gly residues predominate over residues 435-444 (GPRGGVGDPG). Low complexity predominate over residues 497 to 506 (RGLVGDRGLP). The nonhelical region 3 (NC3) stretch occupies residues 519 to 548 (ASDQHIEDVVLKMLQEQLAEMAVSAKREAL). The segment at 549-631 (GATGMMGPPG…PGLPGRPGQA (83 aa)) is triple-helical region 2 (COL2). Pro residues predominate over residues 556–565 (PPGPPGPPGY). The span at 598–610 (KRGEKGDQGEVGR) shows a compositional bias: basic and acidic residues. Residues 632-633 (IN) form a nonhelical region 2 (NC2) region. The triple-helical region 1 (COL1) stretch occupies residues 634-663 (GKDGDRGAPGAPGEAGRPGLPGPIGLPGFC). Low complexity predominate over residues 641-651 (APGAPGEAGRP). Positions 664-688 (EPAACLGASAYASGRLTEPGSIKGP) are nonhelical region 1 (NC1).

Belongs to the fibril-associated collagens with interrupted helices (FACIT) family. Heterotrimer of an alpha 1(IX), an alpha 2(IX) and an alpha 3(IX) chain. The chains are linked to each other by interchain disulfide bonds. Trimers are also cross-linked via hydroxylysines. Post-translationally, prolines at the third position of the tripeptide repeating unit (G-X-Y) are hydroxylated in some or all of the chains. In terms of processing, covalently linked to the telopeptides of type II collagen by hydroxylysine-derived cross-links.

Its subcellular location is the secreted. It is found in the extracellular space. The protein resides in the extracellular matrix. Functionally, structural component of hyaline cartilage and vitreous of the eye. The protein is Collagen alpha-2(IX) chain of Bos taurus (Bovine).